The sequence spans 335 residues: Nucleoid-associated protein YejK (335 aa).

This sequence belongs to the YejK family.

Its subcellular location is the cytoplasm. The protein resides in the nucleoid. The polypeptide is Nucleoid-associated protein YejK (Shigella boydii serotype 18 (strain CDC 3083-94 / BS512)).